The primary structure comprises 618 residues: Phostensin (618 aa).

Basic and acidic residues predominate over residues Arg15–Leu33. The tract at residues Arg15–Gly505 is disordered. Residue Ser54 is modified to Phosphoserine. The segment covering Gln96–Gln109 has biased composition (low complexity). Composition is skewed to basic and acidic residues over residues Arg110–Leu160 and Leu173–Lys197. Phosphoserine occurs at positions 131, 139, 181, and 201. The residue at position 205 (Thr205) is a Phosphothreonine. Ser231 bears the Phosphoserine mark. Basic and acidic residues-rich tracts occupy residues Asp234–Ala245 and Ser271–Thr289. Residues Glu308–Ala319 are compositionally biased toward low complexity. Over residues Lys348–Glu358 the composition is skewed to basic and acidic residues. A compositionally biased stretch (pro residues) spans Arg429–Asp451. Ser437 is modified (phosphoserine). Residue Lys462 is modified to N6-acetyllysine. The segment covering Ala485–Gly505 has biased composition (low complexity). At Ser535 the chain carries Phosphoserine. A disordered region spans residues Tyr556 to Leu594. The segment covering Pro572–Ala583 has biased composition (pro residues). Over residues Pro585–Leu594 the composition is skewed to acidic residues.

In terms of assembly, interacts with Protein phosphatase 1 (PP1).

The protein resides in the cytoplasm. It localises to the cytoskeleton. Functionally, may target protein phosphatase 1 to F-actin cytoskeleton. The protein is Phostensin (PPP1R18) of Sus scrofa (Pig).